Consider the following 426-residue polypeptide: Stationary phase-inducible protein CsiE (426 aa).

2 consecutive PRD domains span residues 120-225 and 229-336; these read ARNF…DPLR and QRDR…ENDL.

The protein is Stationary phase-inducible protein CsiE (csiE) of Escherichia coli (strain K12).